Reading from the N-terminus, the 295-residue chain is N-acetylmuramic acid 6-phosphate etherase (295 aa).

The SIS domain occupies 54-217 (VIASFRQGGR…STASMIGIGK (164 aa)). Glu82 (proton donor) is an active-site residue. Residue Glu113 is part of the active site.

This sequence belongs to the GCKR-like family. MurNAc-6-P etherase subfamily. Homodimer.

It carries out the reaction N-acetyl-D-muramate 6-phosphate + H2O = N-acetyl-D-glucosamine 6-phosphate + (R)-lactate. The protein operates within amino-sugar metabolism; N-acetylmuramate degradation. Functionally, specifically catalyzes the cleavage of the D-lactyl ether substituent of MurNAc 6-phosphate, producing GlcNAc 6-phosphate and D-lactate. This Geobacillus sp. (strain WCH70) protein is N-acetylmuramic acid 6-phosphate etherase.